The chain runs to 620 residues: 1-deoxy-D-xylulose-5-phosphate synthase (620 aa).

Thiamine diphosphate is bound by residues H80 and 121–123; that span reads GHS. D152 contacts Mg(2+). Thiamine diphosphate-binding positions include 153-154, N181, Y288, and E370; that span reads GA. Residue N181 participates in Mg(2+) binding.

The protein belongs to the transketolase family. DXPS subfamily. Homodimer. Requires Mg(2+) as cofactor. Thiamine diphosphate is required as a cofactor.

The enzyme catalyses D-glyceraldehyde 3-phosphate + pyruvate + H(+) = 1-deoxy-D-xylulose 5-phosphate + CO2. It participates in metabolic intermediate biosynthesis; 1-deoxy-D-xylulose 5-phosphate biosynthesis; 1-deoxy-D-xylulose 5-phosphate from D-glyceraldehyde 3-phosphate and pyruvate: step 1/1. Catalyzes the acyloin condensation reaction between C atoms 2 and 3 of pyruvate and glyceraldehyde 3-phosphate to yield 1-deoxy-D-xylulose-5-phosphate (DXP). The chain is 1-deoxy-D-xylulose-5-phosphate synthase from Salmonella typhi.